We begin with the raw amino-acid sequence, 265 residues long: Transcription factor LBX1b (265 aa).

Positions 121-180 form a DNA-binding region, homeobox; sequence RRKSRTAFTNHQLYELEKRFLHQKYLSPADRDQIAHQLGLTNAQVITWFQNRRAKLKRDL.

It is found in the nucleus. In terms of biological role, transcription factor required for the development of hypaxial muscles. This is Transcription factor LBX1b from Danio rerio (Zebrafish).